A 588-amino-acid chain; its full sequence is Protein disulfide-isomerase-like protein of the testis (588 aa).

The signal sequence occupies residues 1-20; the sequence is MELLWTPLLLVAACLSEVLG. Asn-55, Asn-157, and Asn-337 each carry an N-linked (GlcNAc...) asparagine glycan. The Thioredoxin domain occupies 385–448; sequence PVKKLVGKNF…IAKIDITAND (64 aa). Composition is skewed to basic and acidic residues over residues 531-542, 549-567, and 574-588; these read IEDTSKQDRPVK, SIRKPEEPERRKETAEREA, and EQPKPERKLEVKEEL. Residues 531 to 588 are disordered; sequence IEDTSKQDRPVKESPVLDSIRKPEEPERRKETAEREAAAAQPKEQPKPERKLEVKEEL. The Prevents secretion from ER motif lies at 585-588; it reads KEEL.

This sequence belongs to the protein disulfide isomerase family. In terms of assembly, homodimer. The homodimer is not disulfide-linked. Interacts with CLGN and ERO1A. N-glycosylated. In terms of tissue distribution, testis-specific (at protein level).

The protein resides in the endoplasmic reticulum. Probable redox-inactive chaperone involved in spermatogenesis. The polypeptide is Protein disulfide-isomerase-like protein of the testis (Pdilt) (Mus musculus (Mouse)).